Consider the following 430-residue polypeptide: MSQTPPPKDGKNPEAMEVEDAIDEEILKMSTEDLKSRTHLLDNEIRIMRSEVQRINHSATTLKERIKENTERIKVNKTLPYLVSNVVELLDLEDNTEEEGANVDLDAQKTKCAVIKTSTRATYFLPVVGLVDPDELKPGDLVGVNKDSYLILEKLPAEYDSRVKAMEVDERPTEQYSDIGGCDKQIQELIEAVVLPMTHKDRFVNLGIHPPKGVLMYGPPGTGKTMMARAVAAQTKSTFLKLAGPQLVQMFIGDGAKLVRDAFALAKEKAPAIIFIDELDAIGTKRFDSEKAGDREVQRTMLELLNQLDGFQPNDDIKVIAATNRIDVLDPALLRSGRLDRKIELPHPNEDARARIMQIHSRKMNVNKDVNFEELARCTDDFNGAQCKAVCVEAGMIALRRDATEILHEDFMDAILEVQAKKKASLNYYA.

Position 218-225 (218-225 (GPPGTGKT)) interacts with ATP.

Belongs to the AAA ATPase family. As to quaternary structure, component of the 19S proteasome regulatory particle complex. The 26S proteasome consists of a 20S core particle (CP) and two 19S regulatory subunits (RP). The regulatory particle is made of a lid composed of 9 subunits, a base containing 6 ATPases including the PSMC3 homolog rpt-5 and few additional components.

It is found in the cytoplasm. The protein resides in the nucleus. Component of the 26S proteasome, a multiprotein complex involved in the ATP-dependent degradation of ubiquitinated proteins. This complex plays a key role in the maintenance of protein homeostasis by removing misfolded or damaged proteins, which could impair cellular functions, and by removing proteins whose functions are no longer required. Therefore, the proteasome participates in numerous cellular processes, including cell cycle progression, apoptosis, or DNA damage repair. Belongs to the heterohexameric ring of AAA (ATPases associated with diverse cellular activities) proteins that unfolds ubiquitinated target proteins that are concurrently translocated into a proteolytic chamber and degraded into peptides. This Caenorhabditis elegans protein is 26S protease regulatory subunit 6A.